A 552-amino-acid chain; its full sequence is Hydroxylamine reductase (552 aa).

4 residues coordinate [2Fe-2S] cluster: Cys-5, Cys-8, Cys-20, and Cys-27. Positions 251, 275, 319, 407, 435, 460, 494, and 496 each coordinate hybrid [4Fe-2O-2S] cluster. Cys-407 bears the Cysteine persulfide mark.

It belongs to the HCP family. Requires [2Fe-2S] cluster as cofactor. It depends on hybrid [4Fe-2O-2S] cluster as a cofactor.

The protein localises to the cytoplasm. It carries out the reaction A + NH4(+) + H2O = hydroxylamine + AH2 + H(+). Its function is as follows. Catalyzes the reduction of hydroxylamine to form NH(3) and H(2)O. This chain is Hydroxylamine reductase, found in Shigella sonnei (strain Ss046).